Here is a 336-residue protein sequence, read N- to C-terminus: Fructose-1,6-bisphosphatase class 1 (336 aa).

Residues Glu-90, Asp-112, Leu-114, and Asp-115 each contribute to the Mg(2+) site. Residues 115 to 118, Asn-211, and Lys-277 each bind substrate; that span reads DGSS. Glu-283 contributes to the Mg(2+) binding site.

The protein belongs to the FBPase class 1 family. Homotetramer. Mg(2+) is required as a cofactor.

Its subcellular location is the cytoplasm. The enzyme catalyses beta-D-fructose 1,6-bisphosphate + H2O = beta-D-fructose 6-phosphate + phosphate. It functions in the pathway carbohydrate biosynthesis; gluconeogenesis. The sequence is that of Fructose-1,6-bisphosphatase class 1 from Pseudomonas syringae pv. syringae (strain B728a).